The primary structure comprises 392 residues: Succinate--CoA ligase [ADP-forming] subunit beta (392 aa).

The ATP-grasp domain occupies 9 to 248 (KEILRGFGVT…TSEEDPLEVE (240 aa)). ATP-binding positions include Lys-50, 57–59 (GRG), Glu-103, Met-106, and Glu-111. Mg(2+) is bound by residues Asn-203 and Asp-217. Residues Asn-268 and 325–327 (GIV) each bind substrate.

It belongs to the succinate/malate CoA ligase beta subunit family. Heterotetramer of two alpha and two beta subunits. The cofactor is Mg(2+).

The enzyme catalyses succinate + ATP + CoA = succinyl-CoA + ADP + phosphate. It carries out the reaction GTP + succinate + CoA = succinyl-CoA + GDP + phosphate. The protein operates within carbohydrate metabolism; tricarboxylic acid cycle; succinate from succinyl-CoA (ligase route): step 1/1. In terms of biological role, succinyl-CoA synthetase functions in the citric acid cycle (TCA), coupling the hydrolysis of succinyl-CoA to the synthesis of either ATP or GTP and thus represents the only step of substrate-level phosphorylation in the TCA. The beta subunit provides nucleotide specificity of the enzyme and binds the substrate succinate, while the binding sites for coenzyme A and phosphate are found in the alpha subunit. The protein is Succinate--CoA ligase [ADP-forming] subunit beta of Chloroherpeton thalassium (strain ATCC 35110 / GB-78).